The chain runs to 579 residues: Proline--tRNA ligase (579 aa).

The protein belongs to the class-II aminoacyl-tRNA synthetase family. ProS type 1 subfamily. In terms of assembly, homodimer.

It is found in the cytoplasm. The catalysed reaction is tRNA(Pro) + L-proline + ATP = L-prolyl-tRNA(Pro) + AMP + diphosphate. Its function is as follows. Catalyzes the attachment of proline to tRNA(Pro) in a two-step reaction: proline is first activated by ATP to form Pro-AMP and then transferred to the acceptor end of tRNA(Pro). As ProRS can inadvertently accommodate and process non-cognate amino acids such as alanine and cysteine, to avoid such errors it has two additional distinct editing activities against alanine. One activity is designated as 'pretransfer' editing and involves the tRNA(Pro)-independent hydrolysis of activated Ala-AMP. The other activity is designated 'posttransfer' editing and involves deacylation of mischarged Ala-tRNA(Pro). The misacylated Cys-tRNA(Pro) is not edited by ProRS. The polypeptide is Proline--tRNA ligase (Hamiltonella defensa subsp. Acyrthosiphon pisum (strain 5AT)).